Reading from the N-terminus, the 231-residue chain is Ribosomal RNA large subunit methyltransferase E (231 aa).

S-adenosyl-L-methionine-binding residues include G76, W78, D99, D115, and D139. The Proton acceptor role is filled by K179.

This sequence belongs to the class I-like SAM-binding methyltransferase superfamily. RNA methyltransferase RlmE family.

It is found in the cytoplasm. The catalysed reaction is uridine(2552) in 23S rRNA + S-adenosyl-L-methionine = 2'-O-methyluridine(2552) in 23S rRNA + S-adenosyl-L-homocysteine + H(+). Specifically methylates the uridine in position 2552 of 23S rRNA at the 2'-O position of the ribose in the fully assembled 50S ribosomal subunit. The sequence is that of Ribosomal RNA large subunit methyltransferase E from Bradyrhizobium sp. (strain ORS 278).